Reading from the N-terminus, the 101-residue chain is DNA-binding protein Fis (101 aa).

A DNA-binding region (H-T-H motif) is located at residues Gln77 to Lys96.

This sequence belongs to the transcriptional regulatory Fis family. Homodimer.

In terms of biological role, activates ribosomal RNA transcription. Plays a direct role in upstream activation of rRNA promoters. This is DNA-binding protein Fis from Shewanella loihica (strain ATCC BAA-1088 / PV-4).